The following is a 317-amino-acid chain: UAP56-interacting factor (317 aa).

M1 is modified (N-acetylmethionine). Positions 1–26 (MNRFGTRLVGATATPPPPPKARSNEN) are disordered. T14 carries the post-translational modification Phosphothreonine. At S23 the chain carries Phosphoserine. The short motif at 26–44 (NLDKIDMSLDDIIKLNRKE) is the UAP56-binding motif element. 2 positions are modified to phosphoserine: S60 and S117. Residue K139 forms a Glycyl lysine isopeptide (Lys-Gly) (interchain with G-Cter in SUMO1) linkage. A Glycyl lysine isopeptide (Lys-Gly) (interchain with G-Cter in SUMO2) cross-link involves residue K260.

This sequence belongs to the UIF family. As to quaternary structure, interacts with DDX39B/UAP56 and NXF1; interaction with DDX39B/UAP56 and NXF1 are mutually exclusive. Interacts with SSRP1; required for its recruitment to mRNAs. Interacts with CHTOP.

The protein resides in the nucleus. Its subcellular location is the nucleoplasm. It is found in the nucleus speckle. Its function is as follows. Required for mRNA export from the nucleus to the cytoplasm. Acts as an adapter that uses the DDX39B/UAP56-NFX1 pathway to ensure efficient mRNA export and delivering to the nuclear pore. Associates with spliced and unspliced mRNAs simultaneously with ALYREF/THOC4. The sequence is that of UAP56-interacting factor (Fyttd1) from Mus musculus (Mouse).